A 224-amino-acid chain; its full sequence is N-terminal Xaa-Pro-Lys N-methyltransferase 1-A (224 aa).

S-adenosyl-L-methionine is bound by residues glycine 70, arginine 75, 92–94 (DVT), 120–121 (LQ), and glutamine 136.

It belongs to the methyltransferase superfamily. NTM1 family.

The protein localises to the nucleus. It catalyses the reaction N-terminal L-alanyl-L-prolyl-L-lysyl-[protein] + 3 S-adenosyl-L-methionine = N-terminal N,N,N-trimethyl-L-alanyl-L-prolyl-L-lysyl-[protein] + 3 S-adenosyl-L-homocysteine + 3 H(+). It carries out the reaction N-terminal L-seryl-L-prolyl-L-lysyl-[protein] + 3 S-adenosyl-L-methionine = N-terminal N,N,N-trimethyl-L-seryl-L-prolyl-L-lysyl-[protein] + 3 S-adenosyl-L-homocysteine + 3 H(+). The catalysed reaction is N-terminal L-prolyl-L-prolyl-L-lysyl-[protein] + 2 S-adenosyl-L-methionine = N-terminal N,N-dimethyl-L-prolyl-L-prolyl-L-lysyl-[protein] + 2 S-adenosyl-L-homocysteine + 2 H(+). In terms of biological role, distributive alpha-N-methyltransferase that methylates the N-terminus of target proteins containing the N-terminal motif [Ala/Gly/Pro/Ser]-Pro-Lys when the initiator Met is cleaved. Specifically catalyzes mono-, di- or tri-methylation of the exposed alpha-amino group of the Ala, Gly or Ser residue in the [Ala/Gly/Ser]-Pro-Lys motif and mono- or di-methylation of Pro in the Pro-Pro-Lys motif. Required during mitosis for normal bipolar spindle formation and chromosome segregation via its action on target proteins. The polypeptide is N-terminal Xaa-Pro-Lys N-methyltransferase 1-A (ntmt1-a) (Xenopus laevis (African clawed frog)).